Consider the following 360-residue polypeptide: Peptide chain release factor 1 (360 aa).

At Q235 the chain carries N5-methylglutamine. Residues 285 to 304 form a disordered region; the sequence is KRQQEEASTRRNLLGSGDRS.

The protein belongs to the prokaryotic/mitochondrial release factor family. Post-translationally, methylated by PrmC. Methylation increases the termination efficiency of RF1.

The protein localises to the cytoplasm. Functionally, peptide chain release factor 1 directs the termination of translation in response to the peptide chain termination codons UAG and UAA. The chain is Peptide chain release factor 1 from Edwardsiella ictaluri (strain 93-146).